We begin with the raw amino-acid sequence, 143 residues long: Transcriptional regulator MraZ (143 aa).

SpoVT-AbrB domains follow at residues 5–47 (THTP…PRAE) and 76–119 (TDEQ…DAQA).

This sequence belongs to the MraZ family. In terms of assembly, forms oligomers.

It is found in the cytoplasm. The protein resides in the nucleoid. In Mycobacterium leprae (strain Br4923), this protein is Transcriptional regulator MraZ.